A 391-amino-acid chain; its full sequence is Phosphoglycerate kinase (391 aa).

Residues 21 to 23, Arg36, 59 to 62, Arg113, and Arg146 contribute to the substrate site; these read DLN and HLGR. ATP-binding positions include Lys197, Glu319, and 345 to 348; that span reads GGDT.

It belongs to the phosphoglycerate kinase family. In terms of assembly, monomer.

It is found in the cytoplasm. It carries out the reaction (2R)-3-phosphoglycerate + ATP = (2R)-3-phospho-glyceroyl phosphate + ADP. It participates in carbohydrate degradation; glycolysis; pyruvate from D-glyceraldehyde 3-phosphate: step 2/5. The protein is Phosphoglycerate kinase of Xanthomonas campestris pv. campestris (strain 8004).